The chain runs to 221 residues: Superoxide dismutase [Mn] 1, mitochondrial (221 aa).

The N-terminal 24 residues, 1 to 24, are a transit peptide targeting the mitochondrion; it reads MLQNTVRCVSKLVQPITGVAAVRS. Residues His50, His98, Asp182, and His186 each coordinate Mn(2+).

Belongs to the iron/manganese superoxide dismutase family. In terms of assembly, homotetramer. Requires Mn(2+) as cofactor.

Its subcellular location is the mitochondrion matrix. It catalyses the reaction 2 superoxide + 2 H(+) = H2O2 + O2. Functionally, destroys superoxide anion radicals which are normally produced within the cells and which are toxic to biological systems. The chain is Superoxide dismutase [Mn] 1, mitochondrial (sod-2) from Caenorhabditis elegans.